We begin with the raw amino-acid sequence, 399 residues long: Tryptophan synthase beta chain (399 aa).

Position 92 is an N6-(pyridoxal phosphate)lysine (lysine 92).

It belongs to the TrpB family. In terms of assembly, tetramer of two alpha and two beta chains. The cofactor is pyridoxal 5'-phosphate.

It catalyses the reaction (1S,2R)-1-C-(indol-3-yl)glycerol 3-phosphate + L-serine = D-glyceraldehyde 3-phosphate + L-tryptophan + H2O. It participates in amino-acid biosynthesis; L-tryptophan biosynthesis; L-tryptophan from chorismate: step 5/5. Its function is as follows. The beta subunit is responsible for the synthesis of L-tryptophan from indole and L-serine. This chain is Tryptophan synthase beta chain, found in Exiguobacterium sibiricum (strain DSM 17290 / CCUG 55495 / CIP 109462 / JCM 13490 / 255-15).